A 259-amino-acid polypeptide reads, in one-letter code: Hydroxyacylglutathione hydrolase (259 aa).

Residues H56, H58, D60, H61, H112, D133, and H171 each contribute to the Zn(2+) site.

It belongs to the metallo-beta-lactamase superfamily. Glyoxalase II family. As to quaternary structure, monomer. Zn(2+) serves as cofactor.

It carries out the reaction an S-(2-hydroxyacyl)glutathione + H2O = a 2-hydroxy carboxylate + glutathione + H(+). The protein operates within secondary metabolite metabolism; methylglyoxal degradation; (R)-lactate from methylglyoxal: step 2/2. Functionally, thiolesterase that catalyzes the hydrolysis of S-D-lactoyl-glutathione to form glutathione and D-lactic acid. In Pseudomonas entomophila (strain L48), this protein is Hydroxyacylglutathione hydrolase.